A 377-amino-acid chain; its full sequence is Nitric oxide reductase FlRd-NAD(+) reductase (377 aa).

Belongs to the FAD-dependent oxidoreductase family. The cofactor is FAD.

Its subcellular location is the cytoplasm. It carries out the reaction 2 reduced [nitric oxide reductase rubredoxin domain] + NAD(+) + H(+) = 2 oxidized [nitric oxide reductase rubredoxin domain] + NADH. It functions in the pathway nitrogen metabolism; nitric oxide reduction. Functionally, one of at least two accessory proteins for anaerobic nitric oxide (NO) reductase. Reduces the rubredoxin moiety of NO reductase. This is Nitric oxide reductase FlRd-NAD(+) reductase from Salmonella enteritidis PT4 (strain P125109).